A 204-amino-acid polypeptide reads, in one-letter code: Large ribosomal subunit protein uL18 (204 aa).

The protein belongs to the universal ribosomal protein uL18 family. Part of the 50S ribosomal subunit. Contacts the 5S and 23S rRNAs.

This is one of the proteins that bind and probably mediate the attachment of the 5S RNA into the large ribosomal subunit, where it forms part of the central protuberance. The protein is Large ribosomal subunit protein uL18 of Ignicoccus hospitalis (strain KIN4/I / DSM 18386 / JCM 14125).